The following is a 24-amino-acid chain: Brevinin-1Bd (24 aa).

The cysteines at positions 18 and 24 are disulfide-linked.

In terms of tissue distribution, expressed by the skin glands.

Its subcellular location is the secreted. In terms of biological role, antibacterial activity against Gram-positive bacterium S.aureus and Gram-negative bacterium E.coli. Has activity against C.albicans. This Lithobates berlandieri (Rio Grande leopard frog) protein is Brevinin-1Bd.